A 292-amino-acid chain; its full sequence is Protease HtpX homolog (292 aa).

2 consecutive transmembrane segments (helical) span residues 7–27 (TFILMAALTALVMGMGGLIGG) and 29–49 (GGAVIALAIAGAGNLFAWWNS). His131 lines the Zn(2+) pocket. Residue Glu132 is part of the active site. Position 135 (His135) interacts with Zn(2+). 2 helical membrane passes run 148–168 (ATMAGAIAMLGNMLMFSSMFG) and 178–198 (LAAILAMIFAPMAAGLVQMAI). Glu203 provides a ligand contact to Zn(2+).

Belongs to the peptidase M48B family. Zn(2+) is required as a cofactor.

The protein localises to the cell inner membrane. This chain is Protease HtpX homolog, found in Paracoccus denitrificans (strain Pd 1222).